Here is a 1315-residue protein sequence, read N- to C-terminus: DNA-directed RNA polymerase subunit beta' (1315 aa).

4 residues coordinate Zn(2+): cysteine 60, cysteine 62, cysteine 75, and cysteine 78. The Mg(2+) site is built by aspartate 535, aspartate 537, and aspartate 539. Residues cysteine 890, cysteine 967, cysteine 974, and cysteine 977 each contribute to the Zn(2+) site.

The protein belongs to the RNA polymerase beta' chain family. In terms of assembly, the RNAP catalytic core consists of 2 alpha, 1 beta, 1 beta' and 1 omega subunit. When a sigma factor is associated with the core the holoenzyme is formed, which can initiate transcription. It depends on Mg(2+) as a cofactor. The cofactor is Zn(2+).

The catalysed reaction is RNA(n) + a ribonucleoside 5'-triphosphate = RNA(n+1) + diphosphate. Functionally, DNA-dependent RNA polymerase catalyzes the transcription of DNA into RNA using the four ribonucleoside triphosphates as substrates. The protein is DNA-directed RNA polymerase subunit beta' of Mycobacterium sp. (strain MCS).